A 446-amino-acid chain; its full sequence is DNA repair protein RadA (446 aa).

Residues 10 to 27 (CQACGNQQSKWLGKCPDC) form a C4-type zinc finger. 96-103 (GSPGVGKS) contributes to the ATP binding site. A RadA KNRFG motif motif is present at residues 253–257 (KNRFG). Positions 349–446 (DVFVNISGGV…KELSQVLEWM (98 aa)) are lon-protease-like.

It belongs to the RecA family. RadA subfamily.

In terms of biological role, DNA-dependent ATPase involved in processing of recombination intermediates, plays a role in repairing DNA breaks. Stimulates the branch migration of RecA-mediated strand transfer reactions, allowing the 3' invading strand to extend heteroduplex DNA faster. Binds ssDNA in the presence of ADP but not other nucleotides, has ATPase activity that is stimulated by ssDNA and various branched DNA structures, but inhibited by SSB. Does not have RecA's homology-searching function. This chain is DNA repair protein RadA, found in Campylobacter jejuni subsp. jejuni serotype O:2 (strain ATCC 700819 / NCTC 11168).